A 299-amino-acid chain; its full sequence is MPSPPYLGRFAPSPTGPLHFGSLLAAFGSWLLARHAGGQWCVRIEDIDPPRAEPGACERQLRTLAAFGLHSDLPVIRQSERDAAYTAAITRLLQTGQAFECSCSRADLAGMGGIHHACVAPLGERRAVRLRVPPQPPVGFDDALQGPVLQDVYAEVGDVVLRRADGYWAYQLAVVVDDAAQGITDVVRGADLLDSTPRQMVLQRALGLPQPRYLHLPLMLDRDGRKLSKSHDAPALDDADPLPALHAAWAALGQESDALPRHAAVETVLQHAVQHFSPRLLPRQRELDLDERASGLQRD.

L-glutamate is bound by residues 9 to 13 (RFAPS) and Glu45. Positions 12 to 22 (PSPTGPLHFGS) match the 'HIGH' region motif. Cys101, Cys103, and Cys118 together coordinate Zn(2+). Tyr170 and Arg188 together coordinate L-glutamate. A 'KMSKS' region motif is present at residues 226–230 (KLSKS). Lys229 is a binding site for ATP.

Belongs to the class-I aminoacyl-tRNA synthetase family. GluQ subfamily. The cofactor is Zn(2+).

Its function is as follows. Catalyzes the tRNA-independent activation of glutamate in presence of ATP and the subsequent transfer of glutamate onto a tRNA(Asp). Glutamate is transferred on the 2-amino-5-(4,5-dihydroxy-2-cyclopenten-1-yl) moiety of the queuosine in the wobble position of the QUC anticodon. The sequence is that of Glutamyl-Q tRNA(Asp) synthetase from Xanthomonas axonopodis pv. citri (strain 306).